The following is a 119-amino-acid chain: Chorion class B protein M2807 (119 aa).

The left arm stretch occupies residues 1 to 11 (GGLGGGCGRGF). Residues 12 to 80 (SGGGLPVATA…GNGAVGITRE (69 aa)) are central domain. A right arm (Gly-rich tandem repeats) region spans residues 81–119 (GGLGYGAGYGDGYGLGYGGYGGGYGLGYGGYGGCGCGCG).

This sequence belongs to the chorion protein family.

In terms of biological role, this protein is one of many from the eggshell of the silk moth. This Bombyx mori (Silk moth) protein is Chorion class B protein M2807.